A 365-amino-acid chain; its full sequence is Methylthioribose-1-phosphate isomerase (365 aa).

The Proton donor role is filled by Asp255.

This sequence belongs to the eIF-2B alpha/beta/delta subunits family. MtnA subfamily.

The protein localises to the cytoplasm. The protein resides in the nucleus. It carries out the reaction 5-(methylsulfanyl)-alpha-D-ribose 1-phosphate = 5-(methylsulfanyl)-D-ribulose 1-phosphate. It participates in amino-acid biosynthesis; L-methionine biosynthesis via salvage pathway; L-methionine from S-methyl-5-thio-alpha-D-ribose 1-phosphate: step 1/6. In terms of biological role, catalyzes the interconversion of methylthioribose-1-phosphate (MTR-1-P) into methylthioribulose-1-phosphate (MTRu-1-P). This is Methylthioribose-1-phosphate isomerase from Drosophila willistoni (Fruit fly).